We begin with the raw amino-acid sequence, 133 residues long: Acyl-CoA thioester hydrolase YciA (133 aa).

The HotDog ACOT-type domain occupies 8–123 (PQGELVLRTL…LFIYVAVDPD (116 aa)).

The protein belongs to the acyl coenzyme A hydrolase family.

Functionally, catalyzes the hydrolysis of the thioester bond in palmitoyl-CoA and malonyl-CoA. This is Acyl-CoA thioester hydrolase YciA (yciA) from Salmonella typhi.